The primary structure comprises 2454 residues: Probable serine/threonine-protein kinase DDB_G0277071 (2454 aa).

Low complexity predominate over residues threonine 31 to threonine 51. Disordered stretches follow at residues threonine 31–asparagine 57, glutamine 206–asparagine 265, proline 340–glutamate 612, asparagine 963–glutamate 1051, serine 1201–leucine 1330, and isoleucine 1342–threonine 1528. The stretch at lysine 259 to glutamate 307 forms a coiled coil. 2 stretches are compositionally biased toward low complexity: residues glutamine 346–proline 399 and proline 406–serine 428. Polar residues predominate over residues isoleucine 429–glutamine 444. Low complexity-rich tracts occupy residues asparagine 450 to asparagine 461 and serine 475 to asparagine 536. Gly residues predominate over residues glycine 553–isoleucine 568. 5 stretches are compositionally biased toward low complexity: residues asparagine 963–asparagine 1048, serine 1201–proline 1248, asparagine 1275–serine 1284, serine 1299–glycine 1324, and serine 1346–threonine 1403. Residues leucine 1417–isoleucine 1441 show a composition bias toward polar residues. The span at proline 1442–serine 1478 shows a compositional bias: low complexity. Over residues threonine 1479–isoleucine 1491 the composition is skewed to polar residues. The segment covering serine 1509–threonine 1528 has biased composition (low complexity). The region spanning phenylalanine 1730–isoleucine 2034 is the Protein kinase domain. ATP contacts are provided by residues valine 1736–valine 1744 and lysine 1760. Aspartate 1858 serves as the catalytic Proton acceptor. The region spanning arginine 2130–asparagine 2271 is the Tyrosine-protein phosphatase domain. The segment at asparagine 2379–asparagine 2404 is disordered.

Belongs to the protein kinase superfamily. Ser/Thr protein kinase family.

It catalyses the reaction L-seryl-[protein] + ATP = O-phospho-L-seryl-[protein] + ADP + H(+). It carries out the reaction L-threonyl-[protein] + ATP = O-phospho-L-threonyl-[protein] + ADP + H(+). This Dictyostelium discoideum (Social amoeba) protein is Probable serine/threonine-protein kinase DDB_G0277071.